Here is a 73-residue protein sequence, read N- to C-terminus: RNA-binding protein Hfq (73 aa).

A Sm domain is found at 8–68 (DQFLNQIRKD…ISTFAPQKNV (61 aa)).

The protein belongs to the Hfq family. In terms of assembly, homohexamer.

RNA chaperone that binds small regulatory RNA (sRNAs) and mRNAs to facilitate mRNA translational regulation in response to envelope stress, environmental stress and changes in metabolite concentrations. Also binds with high specificity to tRNAs. This Bacillus pumilus (strain SAFR-032) protein is RNA-binding protein Hfq.